The primary structure comprises 194 residues: Peptidyl-tRNA hydrolase (194 aa).

Y17 is a tRNA binding site. The Proton acceptor role is filled by H22. Y68, N70, and N116 together coordinate tRNA.

Belongs to the PTH family. Monomer.

It localises to the cytoplasm. The enzyme catalyses an N-acyl-L-alpha-aminoacyl-tRNA + H2O = an N-acyl-L-amino acid + a tRNA + H(+). Functionally, hydrolyzes ribosome-free peptidyl-tRNAs (with 1 or more amino acids incorporated), which drop off the ribosome during protein synthesis, or as a result of ribosome stalling. In terms of biological role, catalyzes the release of premature peptidyl moieties from peptidyl-tRNA molecules trapped in stalled 50S ribosomal subunits, and thus maintains levels of free tRNAs and 50S ribosomes. The polypeptide is Peptidyl-tRNA hydrolase (Pseudomonas syringae pv. syringae (strain B728a)).